The primary structure comprises 691 residues: Tumor necrosis factor alpha-induced protein 2 (691 aa).

Residues 9-111 (QGFPGQQSVP…KPRPELDGPL (103 aa)) are disordered. Polar residues predominate over residues 12–31 (PGQQSVPGTLNFAVSPQKPR). Low complexity predominate over residues 33 to 45 (TSEAESETSMSEA). Over residues 91-107 (QPRLSDLEVQPKPRPEL) the composition is skewed to basic and acidic residues.

Belongs to the SEC6 family.

In terms of biological role, may play a role as a mediator of inflammation and angiogenesis. The polypeptide is Tumor necrosis factor alpha-induced protein 2 (Tnfaip2) (Mus musculus (Mouse)).